The chain runs to 282 residues: Formamidopyrimidine-DNA glycosylase (282 aa).

The active-site Schiff-base intermediate with DNA is the Pro-2. Glu-3 acts as the Proton donor in catalysis. Lys-60 (proton donor; for beta-elimination activity) is an active-site residue. DNA contacts are provided by His-99, Arg-118, and Lys-163. An FPG-type zinc finger spans residues 248–282; the sequence is LVYRRSGKNCKKCGEKILREKICGRSTHWCPNCQK. Arg-272 (proton donor; for delta-elimination activity) is an active-site residue.

Belongs to the FPG family. Monomer. The cofactor is Zn(2+).

The catalysed reaction is Hydrolysis of DNA containing ring-opened 7-methylguanine residues, releasing 2,6-diamino-4-hydroxy-5-(N-methyl)formamidopyrimidine.. It catalyses the reaction 2'-deoxyribonucleotide-(2'-deoxyribose 5'-phosphate)-2'-deoxyribonucleotide-DNA = a 3'-end 2'-deoxyribonucleotide-(2,3-dehydro-2,3-deoxyribose 5'-phosphate)-DNA + a 5'-end 5'-phospho-2'-deoxyribonucleoside-DNA + H(+). Its function is as follows. Involved in base excision repair of DNA damaged by oxidation or by mutagenic agents. Acts as a DNA glycosylase that recognizes and removes damaged bases. Has a preference for oxidized purines, such as 7,8-dihydro-8-oxoguanine (8-oxoG). Has AP (apurinic/apyrimidinic) lyase activity and introduces nicks in the DNA strand. Cleaves the DNA backbone by beta-delta elimination to generate a single-strand break at the site of the removed base with both 3'- and 5'-phosphates. This is Formamidopyrimidine-DNA glycosylase from Prochlorococcus marinus (strain NATL1A).